The following is a 79-amino-acid chain: U16-theraphotoxin-Cg1a (79 aa).

The first 19 residues, 1–19, serve as a signal peptide directing secretion; it reads MRALLIIAGLALFLVVCNA. The propeptide occupies 20-44; sequence SQVNEQRKLNEMLSVMFAVEEPQER. Disulfide bonds link C47–C62, C54–C67, and C61–C74.

The protein belongs to the neurotoxin 10 (Hwtx-1) family. 34 (Jztx-26) subfamily. In terms of tissue distribution, expressed by the venom gland.

It is found in the secreted. Probable ion channel inhibitor. The sequence is that of U16-theraphotoxin-Cg1a from Chilobrachys guangxiensis (Chinese earth tiger tarantula).